The following is a 217-amino-acid chain: Cytochrome b5 domain-containing protein 1 (217 aa).

The Cytochrome b5 heme-binding domain occupies 6–72 (PRYFTPREVS…NPKTGDVKTH (67 aa)). Heme contacts are provided by H41 and H72.

Belongs to the cytochrome b5 family.

The protein resides in the cytoplasm. The protein localises to the cytoskeleton. Its subcellular location is the cilium axoneme. Radial spoke stalk protein that binds heme under oxidizing conditions. Required for the coordinated beating of multiple cilia maybe by functioning in a redox signaling pathway. The polypeptide is Cytochrome b5 domain-containing protein 1 (cyb5d1) (Xenopus laevis (African clawed frog)).